An 89-amino-acid polypeptide reads, in one-letter code: Protein S100-A6 (89 aa).

2 EF-hand domains span residues 12-47 and 48-83; these read LVAI…IGAK and LQDA…LALI. Residues threonine 28 and glutamate 33 each coordinate Ca(2+). Position 40 is an N6-acetyllysine (lysine 40). Position 47 is an N6-acetyllysine; alternate (lysine 47). Residue lysine 47 is modified to N6-succinyllysine; alternate. Residues aspartate 61, asparagine 63, aspartate 65, glutamate 67, and glutamate 72 each contribute to the Ca(2+) site.

It belongs to the S-100 family. In terms of assembly, homodimer; head to tail assembly of 2 subunits. Interacts with CACYBP in a calcium-dependent manner. Interacts with ANXA2 and ANXA11 (via N-terminus). Interacts with SUGT1. Interacts with TP53; has higher affinity for TP53 that is phosphorylated on its N-terminal domain, and lower affinity for TP53 that is phosphorylated on its C-terminal domain. Interacts with tropomyosin. Interacts with FKBP4. Interacts with PPP5C (via TPR repeats); the interaction is calcium-dependent and modulates PPP5C activity. Interacts with TPPP; this interaction inhibits TPPP dimerization.

The protein localises to the nucleus envelope. Its subcellular location is the cytoplasm. The protein resides in the cell membrane. Its function is as follows. May function as calcium sensor and modulator, contributing to cellular calcium signaling. May function by interacting with other proteins, such as TPR-containing proteins, and indirectly play a role in many physiological processes such as the reorganization of the actin cytoskeleton and in cell motility. Binds 2 calcium ions. Calcium binding is cooperative. The sequence is that of Protein S100-A6 (S100a6) from Rattus norvegicus (Rat).